A 226-amino-acid chain; its full sequence is Staphylococcal superantigen-like 1 (226 aa).

An N-terminal signal peptide occupies residues 1–30 (MKFKAIAKASLALGMLATGVITSNVQSVQA).

It belongs to the staphylococcal/streptococcal toxin family. As to quaternary structure, homodimer.

Its subcellular location is the secreted. Functionally, mediates virulence by proteolytically cleaving host proteins, including collagens types I and IV as well as human cytokines IL8, IL17A, and IFN-gamma. This chain is Staphylococcal superantigen-like 1, found in Staphylococcus aureus (strain NCTC 8325 / PS 47).